Reading from the N-terminus, the 171-residue chain is Co-chaperone protein HscB (171 aa).

The region spanning 2–74 (DYFTLFGLPA…LTRAEYLLSL (73 aa)) is the J domain.

The protein belongs to the HscB family. In terms of assembly, interacts with HscA and stimulates its ATPase activity. Interacts with IscU.

In terms of biological role, co-chaperone involved in the maturation of iron-sulfur cluster-containing proteins. Seems to help targeting proteins to be folded toward HscA. The polypeptide is Co-chaperone protein HscB (Klebsiella pneumoniae subsp. pneumoniae (strain ATCC 700721 / MGH 78578)).